Consider the following 298-residue polypeptide: Small ribosomal subunit protein uS2 (298 aa).

Residues 240-298 are disordered; the sequence is AGENWDTQAPGAGVPGSAFAAASAAAATSWEADGGDWAASSAPPAGESWAETQPTEAKW. The span at 248–271 shows a compositional bias: low complexity; it reads APGAGVPGSAFAAASAAAATSWEA. The span at 289–298 shows a compositional bias: polar residues; it reads AETQPTEAKW.

This sequence belongs to the universal ribosomal protein uS2 family. Component of the small ribosomal subunit. Mature ribosomes consist of a small (40S) and a large (60S) subunit. The 40S subunit contains about 33 different proteins and 1 molecule of RNA (18S). The 60S subunit contains about 49 different proteins and 3 molecules of RNA (25S, 5.8S and 5S). Interacts with rps21.

It localises to the cytoplasm. Functionally, required for the assembly and/or stability of the 40S ribosomal subunit. Required for the processing of the 20S rRNA-precursor to mature 18S rRNA in a late step of the maturation of 40S ribosomal subunits. The sequence is that of Small ribosomal subunit protein uS2 (rps0) from Aspergillus clavatus (strain ATCC 1007 / CBS 513.65 / DSM 816 / NCTC 3887 / NRRL 1 / QM 1276 / 107).